The sequence spans 536 residues: Apolipoprotein N-acyltransferase (536 aa).

A run of 6 helical transmembrane segments spans residues 34-54 (PLWW…RPGA), 64-84 (ALIG…WLFI), 89-109 (YGAL…AFLA), 129-149 (GAAL…GSLW), 172-192 (YVGV…CVQW), and 199-219 (HWPM…AAVQ). The region spanning 244-487 (LQGNIAQDEK…RGVLRGQVHG (244 aa)) is the CN hydrolase domain. Glutamate 283 functions as the Proton acceptor in the catalytic mechanism. Residue lysine 345 is part of the active site. Cysteine 395 acts as the Nucleophile in catalysis. A helical transmembrane segment spans residues 503-523 (WWVARWGLWPLWALAALALAW).

This sequence belongs to the CN hydrolase family. Apolipoprotein N-acyltransferase subfamily.

Its subcellular location is the cell inner membrane. The enzyme catalyses N-terminal S-1,2-diacyl-sn-glyceryl-L-cysteinyl-[lipoprotein] + a glycerophospholipid = N-acyl-S-1,2-diacyl-sn-glyceryl-L-cysteinyl-[lipoprotein] + a 2-acyl-sn-glycero-3-phospholipid + H(+). It functions in the pathway protein modification; lipoprotein biosynthesis (N-acyl transfer). Catalyzes the phospholipid dependent N-acylation of the N-terminal cysteine of apolipoprotein, the last step in lipoprotein maturation. This Verminephrobacter eiseniae (strain EF01-2) protein is Apolipoprotein N-acyltransferase.